Here is a 436-residue protein sequence, read N- to C-terminus: MSDRQQVTNARGERIAIVSGLRTPFAKQATAFHGVSALDMGKMVVNELLARSELDPKEIEQLVYGQVVQMPAAPNIAREIVLGTGMNVSTDAYSVTRACATSFQSTVNVAESIMTGNLDIGIAGGADSSSVLPIGVSKKLAHALVDLNKARSLGQRLSIFRRLGLKDLLPVPPAVAEYSTGLSMGQTAEQMAKTYNISRADQDALAHRSHTLATETWNAGKLAEEVMVAHVPPYKAFIDRDNNIRENSKLESYAKLRPAFDRKHGSVTAANSTPLTDGASAVLLMSEGRAKALGYTPIGYIKSYAFTAIDVWEDMLMGPSYATPLALKRAGMELEDLTLIEMHEAFAAQTLANMQMFGSKKFAEEKLGRNRAIGEIDMSKFNVLGGSLAYGHPFAATGTRLVTQVCHELKRRGGGTGLATACAAGGLGAAMIVEVE.

C99 functions as the Acyl-thioester intermediate in the catalytic mechanism. Catalysis depends on proton acceptor residues H392 and C422.

This sequence belongs to the thiolase-like superfamily. Thiolase family. Heterotetramer of two alpha chains (FadJ) and two beta chains (FadI).

The protein localises to the cytoplasm. The catalysed reaction is an acyl-CoA + acetyl-CoA = a 3-oxoacyl-CoA + CoA. It participates in lipid metabolism; fatty acid beta-oxidation. Its function is as follows. Catalyzes the final step of fatty acid oxidation in which acetyl-CoA is released and the CoA ester of a fatty acid two carbons shorter is formed. The chain is 3-ketoacyl-CoA thiolase from Shewanella pealeana (strain ATCC 700345 / ANG-SQ1).